A 298-amino-acid chain; its full sequence is NAD kinase (298 aa).

The active-site Proton acceptor is aspartate 80. Residues 80 to 81, 154 to 155, arginine 182, aspartate 184, 195 to 200, alanine 219, and glutamine 253 each bind NAD(+); these read DG, ND, and TAYALS.

The protein belongs to the NAD kinase family. A divalent metal cation is required as a cofactor.

The protein resides in the cytoplasm. The catalysed reaction is NAD(+) + ATP = ADP + NADP(+) + H(+). In terms of biological role, involved in the regulation of the intracellular balance of NAD and NADP, and is a key enzyme in the biosynthesis of NADP. Catalyzes specifically the phosphorylation on 2'-hydroxyl of the adenosine moiety of NAD to yield NADP. This Acidovorax sp. (strain JS42) protein is NAD kinase.